The primary structure comprises 908 residues: Magnesium-transporting ATPase, P-type 1 (908 aa).

Basic and acidic residues predominate over residues Met-1–Lys-20. Positions Met-1–Gln-21 are disordered. Over Met-1–Leu-80 the chain is Cytoplasmic. Residues Gln-81–Thr-101 traverse the membrane as a helical segment. Topologically, residues Asp-102–Thr-113 are extracellular. Residues Asp-114–Trp-134 form a helical membrane-spanning segment. Over Gln-135–Ser-293 the chain is Cytoplasmic. The helical transmembrane segment at Val-294–Gly-314 threads the bilayer. Over Phe-315–Ala-323 the chain is Extracellular. The chain crosses the membrane as a helical span at residues Ser-324–Met-341. Residue Glu-337 coordinates Mg(2+). The Cytoplasmic portion of the chain corresponds to Ile-342–Ile-704. Asp-379 acts as the 4-aspartylphosphate intermediate in catalysis. Mg(2+)-binding residues include Asp-650, Asp-654, and Asn-718. Residues Ile-705–Val-724 traverse the membrane as a helical segment. Over Ala-725–Pro-733 the chain is Extracellular. Residues Met-734–Leu-753 traverse the membrane as a helical segment. Residues Asn-743 and Asp-747 each contribute to the Mg(2+) site. The Cytoplasmic segment spans residues Pro-754–Gly-775. Residues Arg-776–Val-799 traverse the membrane as a helical segment. Topologically, residues Phe-800–Gln-808 are extracellular. A helical transmembrane segment spans residues Ala-809–Val-827. Residues His-828–Ser-840 lie on the Cytoplasmic side of the membrane. Residues Arg-841–Ile-860 traverse the membrane as a helical segment. The Extracellular portion of the chain corresponds to Pro-861–Pro-875. The chain crosses the membrane as a helical span at residues Leu-876 to Gly-895. Over Met-896–Phe-908 the chain is Cytoplasmic.

Belongs to the cation transport ATPase (P-type) (TC 3.A.3) family. Type IIIB subfamily.

The protein localises to the cell inner membrane. It carries out the reaction Mg(2+)(out) + ATP + H2O = Mg(2+)(in) + ADP + phosphate + H(+). Mediates magnesium influx to the cytosol. The protein is Magnesium-transporting ATPase, P-type 1 (mgtB) of Salmonella typhimurium (strain LT2 / SGSC1412 / ATCC 700720).